Reading from the N-terminus, the 366-residue chain is Methyltransferase calH (366 aa).

Residues Thr189, Asp216, and 245–246 contribute to the S-adenosyl-L-methionine site; that span reads NA.

Belongs to the class I-like SAM-binding methyltransferase superfamily.

The protein operates within secondary metabolite biosynthesis. Its function is as follows. Methyltransferase; part of the gene cluster that mediates the biosynthesis of calbistrin A and related compounds. Calbistrin A is a secondary metabolite with an interesting structure that was recently found to have bioactivity against leukemia cells. It consists of two polyketides linked by an ester bond: a bicyclic decalin containing polyketide and a linear 12 carbon dioic acid structure. The polyketide synthase calA is probably responsible for forming the decalin moiety. Because calA lacks a designated enoylreductase (ER) domain, the required activity is provided by the trans-enoyl reductase calK. Following release from the PKS, calF then probably catalyzes the oxidation and the subsequent Diels Alder cycloisomerization that lead to the formation of the decalin moiety. The decalin polyketide backbone includes two C-methyl groups, at C7 and C11 in backbone, of which the C7 position is probably methylated by the methyltransferase domain of calA. A candidate for adding the methyl group at C11, if not done by CalA, is the cluster methyltransferase calH. Several additional tailoring enzymes within the cluster could be involved in the modification of the decalin polyketide product. Those include the 3 cytochrome P450 monooxygenases CalE, CalG and CalL, of which one might be responsible for the introduction of the extra hydroxyl group attached to the backbone of the decalin moiety, at position C9 in the backbone, that allows for attachment of the linear moiety. One tailoring enzyme activity that is expected to be involved in biosynthesis of calbistrin is an acyltransferase for connecting the two polyketide synthase products, and which could be performed by the cluster acyltransferase calJ. The enzyme responsible for the biosynthesis of the linear moiety, probably a second PKS, has not been identified yet. The polypeptide is Methyltransferase calH (Penicillium decumbens).